The primary structure comprises 89 residues: Acylphosphatase (89 aa).

Residues Arg3–Tyr89 form the Acylphosphatase-like domain. Active-site residues include Arg18 and Asn36.

This sequence belongs to the acylphosphatase family.

It carries out the reaction an acyl phosphate + H2O = a carboxylate + phosphate + H(+). This is Acylphosphatase (acyP) from Clostridium perfringens (strain ATCC 13124 / DSM 756 / JCM 1290 / NCIMB 6125 / NCTC 8237 / Type A).